A 220-amino-acid polypeptide reads, in one-letter code: ATP-dependent dethiobiotin synthetase BioD (220 aa).

Glu13–Val18 contacts ATP. Thr17 is a Mg(2+) binding site. Lys38 is an active-site residue. Ser42 contributes to the substrate binding site. Residues Asp55, Glu116–Gly119, Asn176–Arg177, and Asn212 contribute to the ATP site. 2 residues coordinate Mg(2+): Asp55 and Glu116.

It belongs to the dethiobiotin synthetase family. As to quaternary structure, homodimer. Mg(2+) is required as a cofactor.

It localises to the cytoplasm. It carries out the reaction (7R,8S)-7,8-diammoniononanoate + CO2 + ATP = (4R,5S)-dethiobiotin + ADP + phosphate + 3 H(+). The protein operates within cofactor biosynthesis; biotin biosynthesis; biotin from 7,8-diaminononanoate: step 1/2. Catalyzes a mechanistically unusual reaction, the ATP-dependent insertion of CO2 between the N7 and N8 nitrogen atoms of 7,8-diaminopelargonic acid (DAPA, also called 7,8-diammoniononanoate) to form a ureido ring. This chain is ATP-dependent dethiobiotin synthetase BioD, found in Photobacterium profundum (strain SS9).